The following is a 430-amino-acid chain: MKTTINQVYKHVGEEVTIGAWIANKRSSGKIAFLQLRDGTGFIQGVVVKAEVDEETFQTAKSVTQETSLYVKGVVKEDERSPLGYELAVTSLEVIHEATDYPITPKEHGTEFLMDHRHLWLRSKRQHATMKIRNEIIRATYEFFNKEGFVKVDPPILTGSAPEGTTELFATKYFDEDAYLSQSGQLYMEAAAMALGKVFSFGPTFRAEKSKTKRHLIEFWMIEPEMAFVEFNENLEVQENYVSFIVQSVLENCKIELNTLGRDTSKLELIKAPFPRITYDEAIQFLKEKGFDDIEWGDDFGAPHETAIAESYDKPVFITHYPTSLKPFYMQPAPDREDVVLCADLIAPEGYGEIIGGSERIHDLELLEARLKEHGLESDAYQWYAELRKYGSVPHSGFGLGLERTVAWICGSPHVRETIPFPRLLNRLYP.

This sequence belongs to the class-II aminoacyl-tRNA synthetase family. Homodimer.

The protein resides in the cytoplasm. The catalysed reaction is tRNA(Asn) + L-asparagine + ATP = L-asparaginyl-tRNA(Asn) + AMP + diphosphate + H(+). In Bacillus licheniformis (strain ATCC 14580 / DSM 13 / JCM 2505 / CCUG 7422 / NBRC 12200 / NCIMB 9375 / NCTC 10341 / NRRL NRS-1264 / Gibson 46), this protein is Asparagine--tRNA ligase.